Here is a 75-residue protein sequence, read N- to C-terminus: Small ribosomal subunit protein bS18 (75 aa).

The protein belongs to the bacterial ribosomal protein bS18 family. As to quaternary structure, part of the 30S ribosomal subunit. Forms a tight heterodimer with protein bS6.

Functionally, binds as a heterodimer with protein bS6 to the central domain of the 16S rRNA, where it helps stabilize the platform of the 30S subunit. The protein is Small ribosomal subunit protein bS18 of Psychromonas ingrahamii (strain DSM 17664 / CCUG 51855 / 37).